Reading from the N-terminus, the 86-residue chain is Large ribosomal subunit protein bL27 (86 aa).

The interval 1 to 26 (MASKKAGGSTKNGRDSQSKRLGVKRF) is disordered.

This sequence belongs to the bacterial ribosomal protein bL27 family.

This Bdellovibrio bacteriovorus (strain ATCC 15356 / DSM 50701 / NCIMB 9529 / HD100) protein is Large ribosomal subunit protein bL27.